A 536-amino-acid chain; its full sequence is Arylsulfatase K (536 aa).

The signal sequence occupies residues 1-24 (MIQKCIALSLFLFSALPEDNIVRA). Residues D42 and C82 each coordinate Ca(2+). C82 acts as the Nucleophile in catalysis. 3-oxoalanine (Cys) is present on C82. K130 contributes to the substrate binding site. N-linked (GlcNAc...) asparagine glycosylation occurs at N195. Residue H253 coordinates substrate. The N-linked (GlcNAc...) asparagine glycan is linked to N264. 2 residues coordinate Ca(2+): D315 and H316. 3 N-linked (GlcNAc...) asparagine glycosylation sites follow: N377, N416, and N501.

The protein belongs to the sulfatase family. The cofactor is Ca(2+). Post-translationally, the conversion to 3-oxoalanine (also known as C-formylglycine, FGly), of a serine or cysteine residue in prokaryotes and of a cysteine residue in eukaryotes, is critical for catalytic activity.

Its subcellular location is the secreted. It localises to the lysosome. It catalyses the reaction an aryl sulfate + H2O = a phenol + sulfate + H(+). It carries out the reaction Hydrolysis of the 2-sulfate groups of the 2-O-sulfo-D-glucuronate residues of chondroitin sulfate, heparin and heparitin sulfate.. Functionally, catalyzes the hydrolysis of pseudosubstrates such as p-nitrocatechol sulfate and p-nitrophenyl sulfate. Catalyzes the hydrolysis of the 2-sulfate groups of the 2-O-sulfo-D-glucuronate residues of chondroitin sulfate, heparin and heparitin sulfate. Acts selectively on 2-sulfoglucuronate and lacks activity against 2-sulfoiduronate. The sequence is that of Arylsulfatase K (arsk) from Xenopus laevis (African clawed frog).